The following is a 244-amino-acid chain: 3-deoxy-manno-octulosonate cytidylyltransferase (244 aa).

It belongs to the KdsB family.

It is found in the cytoplasm. It carries out the reaction 3-deoxy-alpha-D-manno-oct-2-ulosonate + CTP = CMP-3-deoxy-beta-D-manno-octulosonate + diphosphate. It participates in nucleotide-sugar biosynthesis; CMP-3-deoxy-D-manno-octulosonate biosynthesis; CMP-3-deoxy-D-manno-octulosonate from 3-deoxy-D-manno-octulosonate and CTP: step 1/1. The protein operates within bacterial outer membrane biogenesis; lipopolysaccharide biosynthesis. Functionally, activates KDO (a required 8-carbon sugar) for incorporation into bacterial lipopolysaccharide in Gram-negative bacteria. The chain is 3-deoxy-manno-octulosonate cytidylyltransferase from Ruthia magnifica subsp. Calyptogena magnifica.